Consider the following 288-residue polypeptide: MAGAKEIRTKIASVRNTQKITKAMEMVATSKMRKTQERMAAGRPYSETIRKVISHIAKGSIGYKHPFLIERDVKKVGYLVISTDRGLCGGLNINLFKTTLNEFKAWKDKDVSVELGLVGSKGVSFYQSIGLKVRAHITGLGDSPEMERIVGAVNEMINAYRNGEVDMVCIAYNRFENTMSQKTVIAQLLPLPKLENDELETKCSWDYLYEPNPQVLLDSLLIRYLETQVYQAVVDNLASEQAARMVAMKAATDNAGALIDELQLVYNKARQASITNELNEIVAGAAAI.

This sequence belongs to the ATPase gamma chain family. F-type ATPases have 2 components, CF(1) - the catalytic core - and CF(0) - the membrane proton channel. CF(1) has five subunits: alpha(3), beta(3), gamma(1), delta(1), epsilon(1). CF(0) has three main subunits: a, b and c.

The protein localises to the cell inner membrane. Its function is as follows. Produces ATP from ADP in the presence of a proton gradient across the membrane. The gamma chain is believed to be important in regulating ATPase activity and the flow of protons through the CF(0) complex. The chain is ATP synthase gamma chain from Haemophilus ducreyi (strain 35000HP / ATCC 700724).